A 301-amino-acid chain; its full sequence is Protein FdhE homolog (301 aa).

Belongs to the FdhE family.

Its subcellular location is the cytoplasm. Necessary for formate dehydrogenase activity. This chain is Protein FdhE homolog, found in Shewanella baltica (strain OS185).